A 456-amino-acid chain; its full sequence is Chromosomal replication initiator protein DnaA (456 aa).

Positions methionine 1–tyrosine 73 are domain I, interacts with DnaA modulators. Residues tyrosine 73 to alanine 117 are domain II. The tract at residues asparagine 118 to isoleucine 334 is domain III, AAA+ region. Residues glycine 162, glycine 164, lysine 165, and threonine 166 each coordinate ATP. The segment at serine 335–histidine 456 is domain IV, binds dsDNA.

The protein belongs to the DnaA family. In terms of assembly, oligomerizes as a right-handed, spiral filament on DNA at oriC.

It is found in the cytoplasm. In terms of biological role, plays an essential role in the initiation and regulation of chromosomal replication. ATP-DnaA binds to the origin of replication (oriC) to initiate formation of the DNA replication initiation complex once per cell cycle. Binds the DnaA box (a 9 base pair repeat at the origin) and separates the double-stranded (ds)DNA. Forms a right-handed helical filament on oriC DNA; dsDNA binds to the exterior of the filament while single-stranded (ss)DNA is stabiized in the filament's interior. The ATP-DnaA-oriC complex binds and stabilizes one strand of the AT-rich DNA unwinding element (DUE), permitting loading of DNA polymerase. After initiation quickly degrades to an ADP-DnaA complex that is not apt for DNA replication. Binds acidic phospholipids. The chain is Chromosomal replication initiator protein DnaA from Trichodesmium erythraeum (strain IMS101).